A 677-amino-acid chain; its full sequence is Methionine--tRNA ligase (677 aa).

A 'HIGH' region motif is present at residues 15-25 (PYANGSIHLGH). The Zn(2+) site is built by cysteine 146, cysteine 149, cysteine 159, and cysteine 162. The 'KMSKS' region signature appears at 333-337 (KMSKS). Lysine 336 contacts ATP. The tRNA-binding domain maps to 575–677 (DFAKVDLRVA…DGAKPGQQVK (103 aa)).

This sequence belongs to the class-I aminoacyl-tRNA synthetase family. MetG type 1 subfamily. As to quaternary structure, homodimer. Requires Zn(2+) as cofactor.

The protein localises to the cytoplasm. The catalysed reaction is tRNA(Met) + L-methionine + ATP = L-methionyl-tRNA(Met) + AMP + diphosphate. Functionally, is required not only for elongation of protein synthesis but also for the initiation of all mRNA translation through initiator tRNA(fMet) aminoacylation. This Klebsiella pneumoniae subsp. pneumoniae (strain ATCC 700721 / MGH 78578) protein is Methionine--tRNA ligase.